A 21-amino-acid polypeptide reads, in one-letter code: Peptidyl-prolyl cis-trans isomerase (21 aa).

The segment at 1–21 (ENFKIKHTEPGLLSMANAGKN) is disordered.

Belongs to the cyclophilin-type PPIase family. PPIase A subfamily.

The catalysed reaction is [protein]-peptidylproline (omega=180) = [protein]-peptidylproline (omega=0). Functionally, PPIases accelerate the folding of proteins. It catalyzes the cis-trans isomerization of proline imidic peptide bonds in oligopeptides. The protein is Peptidyl-prolyl cis-trans isomerase of Naegleria fowleri (Brain eating amoeba).